The chain runs to 346 residues: Large ribosomal subunit protein uL1c (346 aa).

A chloroplast-targeting transit peptide spans Met-1–Ser-70. Residue Tyr-129 is modified to Phosphotyrosine. Phosphothreonine is present on Thr-177. Ser-197 bears the Phosphoserine mark.

It belongs to the universal ribosomal protein uL1 family. Part of the 50S ribosomal subunit.

The protein resides in the plastid. Its subcellular location is the chloroplast. In terms of biological role, this protein binds directly to 23S ribosomal RNA. The protein is Large ribosomal subunit protein uL1c (RPL1) of Arabidopsis thaliana (Mouse-ear cress).